The following is a 190-amino-acid chain: MNNYIFIISAPSGAGKSSLLKAFLATDIGKDNYAVAISHTTREPRVGEINSREYYFVTVAEFEQLLSQDGFIEYAKVFKNYYGTSKAELDRLLALGKNIILEIDWQGAQQTRAIYGDRAKSIFILPPSLDELRKRLEKRNTDSKETIDYRMEQVQSEISHADEYDYLLVNDDFSQSLEQLCKYFEQNIQS.

The region spanning 3–185 (NYIFIISAPS…SLEQLCKYFE (183 aa)) is the Guanylate kinase-like domain. 10 to 17 (APSGAGKS) lines the ATP pocket.

This sequence belongs to the guanylate kinase family.

The protein resides in the cytoplasm. It carries out the reaction GMP + ATP = GDP + ADP. Functionally, essential for recycling GMP and indirectly, cGMP. This is Guanylate kinase from Francisella tularensis subsp. holarctica (strain LVS).